Here is a 122-residue protein sequence, read N- to C-terminus: MENVYENSYMIVGIFLLLGILLPVVALTLGKLLRPHKPSEAKNTTYESGIEPYHDANVRFHARYYIFALLFVIFDVETLFLYPWAVAYDKLGLFALIEMLIFVAMLLIGLAYAWKKKVLQWL.

3 consecutive transmembrane segments (helical) span residues 10 to 30 (MIVG…LTLG), 66 to 86 (IFAL…PWAV), and 91 to 111 (LGLF…IGLA).

Belongs to the complex I subunit 3 family. As to quaternary structure, NDH-1 is composed of 14 different subunits. Subunits NuoA, H, J, K, L, M, N constitute the membrane sector of the complex.

It localises to the cell membrane. It catalyses the reaction a quinone + NADH + 5 H(+)(in) = a quinol + NAD(+) + 4 H(+)(out). In terms of biological role, NDH-1 shuttles electrons from NADH, via FMN and iron-sulfur (Fe-S) centers, to quinones in the respiratory chain. The immediate electron acceptor for the enzyme in this species is believed to be a menaquinone. Couples the redox reaction to proton translocation (for every two electrons transferred, four hydrogen ions are translocated across the cytoplasmic membrane), and thus conserves the redox energy in a proton gradient. This chain is NADH-quinone oxidoreductase subunit A, found in Bacillus cytotoxicus (strain DSM 22905 / CIP 110041 / 391-98 / NVH 391-98).